The chain runs to 594 residues: uncharacterized protein (594 aa).

In terms of biological role, the presence of the two linear plasmids, termed pGKL1 and pGKL2, in strains of Kluyveromyces lactis confers the killer phenotype to the host cell, by promoting the secretion of a toxin able to inhibit the growth of sensitive strains. This is an uncharacterized protein from Kluyveromyces lactis (strain ATCC 8585 / CBS 2359 / DSM 70799 / NBRC 1267 / NRRL Y-1140 / WM37) (Yeast).